Here is a 394-residue protein sequence, read N- to C-terminus: Elongation factor Tu 2 (394 aa).

A tr-type G domain is found at 10–204 (KPHVNVGTIG…ALDSYIPEPE (195 aa)). Positions 19-26 (GHVDHGKT) are G1. GTP is bound at residue 19 to 26 (GHVDHGKT). Residue Thr-26 participates in Mg(2+) binding. Residues 60 to 64 (GITIS) form a G2 region. Residues 81 to 84 (DCPG) are G3. GTP-binding positions include 81-85 (DCPGH) and 136-139 (NKCD). The tract at residues 136-139 (NKCD) is G4. The segment at 174–176 (SAL) is G5.

Belongs to the TRAFAC class translation factor GTPase superfamily. Classic translation factor GTPase family. EF-Tu/EF-1A subfamily. As to quaternary structure, monomer.

Its subcellular location is the cytoplasm. It catalyses the reaction GTP + H2O = GDP + phosphate + H(+). Functionally, GTP hydrolase that promotes the GTP-dependent binding of aminoacyl-tRNA to the A-site of ribosomes during protein biosynthesis. The sequence is that of Elongation factor Tu 2 from Pseudoalteromonas translucida (strain TAC 125).